Here is a 379-residue protein sequence, read N- to C-terminus: Subtilisin Carlsberg (379 aa).

An N-terminal signal peptide occupies residues 1–29; that stretch reads MMRKKSFWLGMLTAFMLVFTMAFSDSASA. Residues 30–105 constitute a propeptide that is removed on maturation; it reads AQPAKNVEKD…VEEDHVAHAL (76 aa). An Inhibitor I9 domain is found at 44–102; that stretch reads FKSGVKTASVKKDIIKESGGKVDKQFRIINAAKAKLDKEALKEVKNDPDVAYVEEDHVA. Gln-107 is a binding site for Ca(2+). Residues 110–378 enclose the Peptidase S8 domain; that stretch reads PYGIPLIKAD…KGLINVEAAA (269 aa). Asp-137 acts as the Charge relay system in catalysis. Residue Asp-146 coordinates Ca(2+). The active-site Charge relay system is His-168. Positions 179, 181, 183, 185, 273, 275, and 278 each coordinate Ca(2+). Ser-325 functions as the Charge relay system in the catalytic mechanism.

Belongs to the peptidase S8 family. It depends on Ca(2+) as a cofactor.

It is found in the secreted. The catalysed reaction is Hydrolysis of proteins with broad specificity for peptide bonds, and a preference for a large uncharged residue in P1. Hydrolyzes peptide amides.. Its activity is regulated as follows. Inhibited by p-chlorophenyl and 1-naphthyl boronic acid derivatives. Its function is as follows. Subtilisin is an extracellular alkaline serine protease, it catalyzes the hydrolysis of proteins and peptide amides. Shows high specificity for aromatic and hydrophobic amino acids in the P1 substrate position. May play an important role in the degradation of feather keratin. The sequence is that of Subtilisin Carlsberg from Bacillus licheniformis.